A 300-amino-acid chain; its full sequence is Protein p34 (300 aa).

5 helical membrane-spanning segments follow: residues 14–34 (YLSV…WVVT), 39–59 (ILAS…NLVA), 87–107 (SIFF…SLFI), 119–139 (IIMY…TYVI), and 170–190 (LSDY…LYIF).

Belongs to the cation diffusion facilitator (CDF) transporter (TC 2.A.4) family.

The protein resides in the cell membrane. The protein is Protein p34 (p34) of Rickettsia prowazekii (strain Madrid E).